A 163-amino-acid polypeptide reads, in one-letter code: Phosphopantetheine adenylyltransferase (163 aa).

Threonine 10 is a substrate binding site. Residues 10–11 (TF) and histidine 18 each bind ATP. Residues lysine 42, leucine 74, and arginine 88 each coordinate substrate. Residues 89-91 (GLR), glutamate 99, and 124-130 (NSFISST) contribute to the ATP site.

The protein belongs to the bacterial CoaD family. In terms of assembly, homohexamer. It depends on Mg(2+) as a cofactor.

It is found in the cytoplasm. The catalysed reaction is (R)-4'-phosphopantetheine + ATP + H(+) = 3'-dephospho-CoA + diphosphate. It functions in the pathway cofactor biosynthesis; coenzyme A biosynthesis; CoA from (R)-pantothenate: step 4/5. In terms of biological role, reversibly transfers an adenylyl group from ATP to 4'-phosphopantetheine, yielding dephospho-CoA (dPCoA) and pyrophosphate. The protein is Phosphopantetheine adenylyltransferase of Shewanella sp. (strain MR-4).